A 272-amino-acid polypeptide reads, in one-letter code: Shikimate dehydrogenase (NADP(+)) (272 aa).

Shikimate is bound by residues 14–16 (SKS) and Thr-61. Lys-65 functions as the Proton acceptor in the catalytic mechanism. NADP(+) is bound at residue Glu-77. Shikimate is bound by residues Asn-86 and Asp-102. NADP(+)-binding positions include 126–130 (GAGGA), 149–154 (NRTFSR), and Met-213. Tyr-215 contacts shikimate. Gly-237 provides a ligand contact to NADP(+).

The protein belongs to the shikimate dehydrogenase family. In terms of assembly, homodimer.

It catalyses the reaction shikimate + NADP(+) = 3-dehydroshikimate + NADPH + H(+). The protein operates within metabolic intermediate biosynthesis; chorismate biosynthesis; chorismate from D-erythrose 4-phosphate and phosphoenolpyruvate: step 4/7. Functionally, involved in the biosynthesis of the chorismate, which leads to the biosynthesis of aromatic amino acids. Catalyzes the reversible NADPH linked reduction of 3-dehydroshikimate (DHSA) to yield shikimate (SA). The polypeptide is Shikimate dehydrogenase (NADP(+)) (Photorhabdus laumondii subsp. laumondii (strain DSM 15139 / CIP 105565 / TT01) (Photorhabdus luminescens subsp. laumondii)).